The following is a 469-amino-acid chain: Protein apterous (469 aa).

Disordered stretches follow at residues 21-44 (GPGA…CGSA) and 111-141 (EVSD…DSKI). LIM zinc-binding domains lie at 148 to 200 (CSGC…CKND) and 210 to 263 (CSRC…CRTH). Residues 367 to 426 (TKRMRTSFKHHQLRTMKSYFAINHNPDAKDLKQLSQKTGLPKRVLQVWFQNARAKWRRMM) constitute a DNA-binding region (homeobox).

As to expression, expressed in PNS and CNS.

Its subcellular location is the nucleus. Its function is as follows. Required for the normal development of the wing and halter imaginal disks. This Drosophila melanogaster (Fruit fly) protein is Protein apterous (ap).